A 186-amino-acid chain; its full sequence is Photosystem I assembly protein Ycf4 (186 aa).

The next 2 membrane-spanning stretches (helical) occupy residues 22–42 and 57–77; these read FCWA…GTSS and IIFF…LFIS.

It belongs to the Ycf4 family.

It localises to the plastid. The protein resides in the chloroplast thylakoid membrane. In terms of biological role, seems to be required for the assembly of the photosystem I complex. This chain is Photosystem I assembly protein Ycf4, found in Vitis vinifera (Grape).